Reading from the N-terminus, the 170-residue chain is MNKILGIDPLKKFIFGISAFVLLFWQLNVGAANATALREVDRTVNLNETETVVLSDQQVAKGERIFINTCSTCHNSGRTKSNPNVTLSLVDLEGAEPRRDNILAMVDYLKNPTSYDGELDLSQLHPNTVRADIWSSMRNLNEEDLQNVSGYVLVQAQVRGVAWGGGKTVN.

The first 34 residues, methionine 1 to alanine 34, serve as a signal peptide directing secretion. Cysteine 70, cysteine 73, histidine 74, and histidine 125 together coordinate heme c.

Belongs to the cytochrome c family. PsbV subfamily. In terms of assembly, PSII is composed of 1 copy each of membrane proteins PsbA, PsbB, PsbC, PsbD, PsbE, PsbF, PsbH, PsbI, PsbJ, PsbK, PsbL, PsbM, PsbT, PsbX, PsbY, PsbZ, Psb30/Ycf12, peripheral proteins PsbO, CyanoQ (PsbQ), PsbU, PsbV and a large number of cofactors. It forms dimeric complexes. Heme c serves as cofactor.

The protein localises to the cellular thylakoid membrane. In terms of biological role, one of the extrinsic, lumenal subunits of photosystem II (PSII). PSII is a light-driven water plastoquinone oxidoreductase, using light energy to abstract electrons from H(2)O, generating a proton gradient subsequently used for ATP formation. The extrinsic proteins stabilize the structure of photosystem II oxygen-evolving complex (OEC), the ion environment of oxygen evolution and protect the OEC against heat-induced inactivation. Low-potential cytochrome c that plays a role in the OEC of PSII. In Picosynechococcus sp. (strain ATCC 27264 / PCC 7002 / PR-6) (Agmenellum quadruplicatum), this protein is Photosystem II extrinsic protein V.